Reading from the N-terminus, the 254-residue chain is Distal membrane-arm assembly complex protein 2 (254 aa).

At Ser-250 the chain carries Phosphoserine.

This sequence belongs to the ATP synthase subunit s family. In terms of assembly, interacts with incompletely assembled mitochondrial NADH:ubiquinone oxidoreductase complex (complex I).

It is found in the mitochondrion. In terms of biological role, required for the assembly of the mitochondrial NADH:ubiquinone oxidoreductase complex (complex I). Involved in the assembly of the distal region of complex I. The polypeptide is Distal membrane-arm assembly complex protein 2 (Rattus norvegicus (Rat)).